Consider the following 290-residue polypeptide: Ribosomal large subunit pseudouridine synthase B (290 aa).

The region spanning 3 to 75 (EKLQKVLARA…ICRVLAYYKP (73 aa)) is the S4 RNA-binding domain. The active-site Nucleophile is the Asp-110. The segment at 256–290 (VEKDRRRMKANQIRRAVKRHSQVSGGRRSGGRNNG) is disordered.

It belongs to the pseudouridine synthase RsuA family.

It catalyses the reaction uridine(2605) in 23S rRNA = pseudouridine(2605) in 23S rRNA. Its function is as follows. Responsible for synthesis of pseudouridine from uracil-2605 in 23S ribosomal RNA. In Escherichia coli O157:H7, this protein is Ribosomal large subunit pseudouridine synthase B (rluB).